The following is a 153-amino-acid chain: Arginine repressor (153 aa).

Belongs to the ArgR family.

It localises to the cytoplasm. The protein operates within amino-acid biosynthesis; L-arginine biosynthesis [regulation]. Its function is as follows. Regulates arginine biosynthesis genes. The chain is Arginine repressor from Actinobacillus pleuropneumoniae serotype 7 (strain AP76).